Here is a 1014-residue protein sequence, read N- to C-terminus: Latrophilin-like protein 1 (1014 aa).

The first 27 residues, methionine 1–alanine 27, serve as a signal peptide directing secretion. The N-linked (GlcNAc...) asparagine glycan is linked to asparagine 4. The Extracellular portion of the chain corresponds to serine 28–threonine 555. Positions isoleucine 43–valine 134 constitute an SUEL-type lectin domain. Residues glutamate 359–aspartate 542 form the GAIN-B domain. Residues asparagine 473 and asparagine 518 are each glycosylated (N-linked (GlcNAc...) asparagine). 2 disulfides stabilise this stretch: cysteine 497-cysteine 524 and cysteine 512-cysteine 526. A GPS region spans residues cysteine 497–aspartate 542. Residues tyrosine 556–phenylalanine 576 form a helical membrane-spanning segment. At serine 577 to valine 584 the chain is on the cytoplasmic side. A helical membrane pass occupies residues phenylalanine 585–isoleucine 605. The Extracellular segment spans residues threonine 606–glutamine 613. A helical membrane pass occupies residues cysteine 614–leucine 634. Topologically, residues glutamate 635–arginine 653 are cytoplasmic. A helical transmembrane segment spans residues phenylalanine 654 to tyrosine 674. Over asparagine 675 to asparagine 692 the chain is Extracellular. Residues phenylalanine 693 to valine 713 form a helical membrane-spanning segment. Over lysine 714 to lysine 745 the chain is Cytoplasmic. The helical transmembrane segment at glycine 746–glutamate 766 threads the bilayer. The Extracellular portion of the chain corresponds to aspartate 767–serine 770. Residues isoleucine 771–phenylalanine 791 traverse the membrane as a helical segment. The Cytoplasmic portion of the chain corresponds to histidine 792–leucine 1014. 2 disordered regions span residues glycine 814–serine 833 and tyrosine 932–proline 994. Pro residues predominate over residues proline 941 to threonine 952. The segment covering serine 965 to serine 986 has biased composition (low complexity).

The protein belongs to the G-protein coupled receptor 2 family. LN-TM7 subfamily. As to quaternary structure, monomer and homodimer. Post-translationally, autoproteolytically processed at the GPS region of the GAIN-B domain; this cleavage modulates receptor activity. As to expression, expressed in epidermal precursor cells and pharyngeal primordium. In adults expression is seen in pharyngeal muscle cells and nervous system, the nerve ring, the gonad, and the vulva.

It is found in the cell membrane. Its function is as follows. Has a role in the establishment of anterior-posterior polarity in tissues during embryogenesis. Required for the alignment of the mitotic spindles and division planes. May have a role in cell death events. Required for normal defection and oocyte fertilization. Involved in sperm function. Operates in pharyngeal pumping during feeding. This Caenorhabditis elegans protein is Latrophilin-like protein 1.